The following is a 134-amino-acid chain: MRILLLSALFLSLTTLVLSADLGIEKTHVVECNRKTTKGDTVHMHYRGTLAADGSEFDSSYGRNQPLKFKLGAGRVIKGWDEGLLDMCVGEKRTLTIPPEYGYGERGIGPIPGGATLIFETELVQIEGVNNDEL.

A signal peptide spans 1–19 (MRILLLSALFLSLTTLVLS). Residues 39–127 (GDTVHMHYRG…IFETELVQIE (89 aa)) enclose the PPIase FKBP-type domain. The short motif at 131 to 134 (NDEL) is the Prevents secretion from ER element.

Belongs to the FKBP-type PPIase family. FKBP2 subfamily.

It localises to the endoplasmic reticulum. The catalysed reaction is [protein]-peptidylproline (omega=180) = [protein]-peptidylproline (omega=0). Inhibited by both FK506 and rapamycin. Functionally, PPIases accelerate the folding of proteins. It catalyzes the cis-trans isomerization of proline imidic peptide bonds in oligopeptides. This Aspergillus fumigatus (strain ATCC MYA-4609 / CBS 101355 / FGSC A1100 / Af293) (Neosartorya fumigata) protein is FK506-binding protein 2 (fpr2).